The chain runs to 199 residues: Small ribosomal subunit protein uS4 (199 aa).

The 64-residue stretch at 91–154 (SRLDNLVYRM…RGLQLIKDAL (64 aa)) folds into the S4 RNA-binding domain.

The protein belongs to the universal ribosomal protein uS4 family. In terms of assembly, part of the 30S ribosomal subunit. Contacts protein S5. The interaction surface between S4 and S5 is involved in control of translational fidelity.

Its function is as follows. One of the primary rRNA binding proteins, it binds directly to 16S rRNA where it nucleates assembly of the body of the 30S subunit. In terms of biological role, with S5 and S12 plays an important role in translational accuracy. This Brevibacillus brevis (strain 47 / JCM 6285 / NBRC 100599) protein is Small ribosomal subunit protein uS4.